The primary structure comprises 95 residues: Large ribosomal subunit protein eL31 (95 aa).

The protein belongs to the eukaryotic ribosomal protein eL31 family.

This Pyrococcus horikoshii (strain ATCC 700860 / DSM 12428 / JCM 9974 / NBRC 100139 / OT-3) protein is Large ribosomal subunit protein eL31 (rpl31e).